A 270-amino-acid polypeptide reads, in one-letter code: DNA repair protein RecO (270 aa).

Positions 202-221 (PELPPSTIDADTDNPSQPPS) are disordered.

Belongs to the RecO family.

Functionally, involved in DNA repair and RecF pathway recombination. In Rhodopirellula baltica (strain DSM 10527 / NCIMB 13988 / SH1), this protein is DNA repair protein RecO.